Consider the following 352-residue polypeptide: Histidine biosynthesis bifunctional protein HisB (352 aa).

The segment at 1-163 is histidinol-phosphatase; that stretch reads MKKILFIDRD…MVASAIINDA (163 aa). Aspartate 8 functions as the Nucleophile in the catalytic mechanism. Residues aspartate 8 and aspartate 10 each contribute to the Mg(2+) site. Aspartate 10 serves as the catalytic Proton donor. Zn(2+)-binding residues include cysteine 91, histidine 93, cysteine 99, and cysteine 101. Aspartate 128 lines the Mg(2+) pocket. The tract at residues 164 to 352 is imidazoleglycerol-phosphate dehydratase; that stretch reads RKASVQRKTK…NYLPSTKGVL (189 aa).

In the N-terminal section; belongs to the histidinol-phosphatase family. The protein in the C-terminal section; belongs to the imidazoleglycerol-phosphate dehydratase family. Mg(2+) serves as cofactor. The cofactor is Zn(2+).

It localises to the cytoplasm. The catalysed reaction is D-erythro-1-(imidazol-4-yl)glycerol 3-phosphate = 3-(imidazol-4-yl)-2-oxopropyl phosphate + H2O. It carries out the reaction L-histidinol phosphate + H2O = L-histidinol + phosphate. Its pathway is amino-acid biosynthesis; L-histidine biosynthesis; L-histidine from 5-phospho-alpha-D-ribose 1-diphosphate: step 6/9. The protein operates within amino-acid biosynthesis; L-histidine biosynthesis; L-histidine from 5-phospho-alpha-D-ribose 1-diphosphate: step 8/9. This chain is Histidine biosynthesis bifunctional protein HisB, found in Legionella pneumophila subsp. pneumophila (strain Philadelphia 1 / ATCC 33152 / DSM 7513).